A 20-amino-acid polypeptide reads, in one-letter code: Short cationic peptide-6a (20 aa).

Ser-20 carries the post-translational modification Serine amide.

As to expression, expressed by the venom gland.

The protein resides in the secreted. This is Short cationic peptide-6a from Cupiennius salei (American wandering spider).